The following is a 366-amino-acid chain: Mitogen-activated protein kinase sakA (366 aa).

The Protein kinase domain occupies Y20–L299. ATP is bound by residues V26–V34 and K49. D141 serves as the catalytic Proton acceptor. T171 carries the post-translational modification Phosphothreonine. The TXY signature appears at T171–Y173. Y173 carries the phosphotyrosine modification.

It belongs to the protein kinase superfamily. Ser/Thr protein kinase family. MAP kinase subfamily. HOG1 sub-subfamily. As to quaternary structure, interacts with the AGC kinase ypkA. Interacts with sakA upon osmotic and cell wall stresses. The cofactor is Mg(2+). Dually phosphorylated on Thr-171 and Tyr-173, which activates the enzyme. Environmental stresses such as high temperature, osmotic stress, cold stress or ethanol stress modulate the activation of sakA via phosphorylation.

Its subcellular location is the cytoplasm. The protein resides in the nucleus. It carries out the reaction L-seryl-[protein] + ATP = O-phospho-L-seryl-[protein] + ADP + H(+). It catalyses the reaction L-threonyl-[protein] + ATP = O-phospho-L-threonyl-[protein] + ADP + H(+). Its activity is regulated as follows. Activated by tyrosine and threonine phosphorylation. Deactivated by protein phosphatase 2C homolog 2 ptcB. Functionally, proline-directed serine/threonine-protein kinase involved in a signal transduction pathway that is activated by changes in the osmolarity of the extracellular environment. Controls osmotic regulation of transcription of target genes. Involved in environmental stress response. With mpkC, plays a redundant or cooperative role in the conidial stress resistance. Also plays a supportive role in osmotic stress adaptation when sakA is deficient. Involved in paradoxical growth, the cell wall integrity (CWI) pathway and biofilm formation. Also collaborates with mpkC to allow ful virulence in a neutropenic murine model ofinvasive pulmonary aspergillosis. MpkC and sakA have both independent and collaborative functions during the transcriptional response to transient osmotic stress and sakA not only seems to modulate pathways involved in nucleotide, fatty acid, nitrogen and organic acid biosynthesis but is also important for the activation of genes involved in mitochondrial and endoplasmic reticulum functions. The protein is Mitogen-activated protein kinase sakA of Aspergillus fumigatus (strain ATCC MYA-4609 / CBS 101355 / FGSC A1100 / Af293) (Neosartorya fumigata).